The primary structure comprises 194 residues: Phosphoheptose isomerase (194 aa).

One can recognise an SIS domain in the interval 37 to 194 (ISDSFKQGGK…LIEFEMAKDV (158 aa)). Residue 52–54 (NGG) coordinates substrate. Zn(2+)-binding residues include H61 and E65. Substrate-binding positions include E65, 93 to 94 (ND), 119 to 121 (STS), S124, and Q172. Zn(2+)-binding residues include Q172 and H180.

This sequence belongs to the SIS family. GmhA subfamily. Homotetramer. Zn(2+) serves as cofactor.

The protein resides in the cytoplasm. The enzyme catalyses 2 D-sedoheptulose 7-phosphate = D-glycero-alpha-D-manno-heptose 7-phosphate + D-glycero-beta-D-manno-heptose 7-phosphate. Its pathway is carbohydrate biosynthesis; D-glycero-D-manno-heptose 7-phosphate biosynthesis; D-glycero-alpha-D-manno-heptose 7-phosphate and D-glycero-beta-D-manno-heptose 7-phosphate from sedoheptulose 7-phosphate: step 1/1. Catalyzes the isomerization of sedoheptulose 7-phosphate in D-glycero-D-manno-heptose 7-phosphate. The chain is Phosphoheptose isomerase from Actinobacillus succinogenes (strain ATCC 55618 / DSM 22257 / CCUG 43843 / 130Z).